The sequence spans 197 residues: Protein lin-7 homolog C (197 aa).

Residue alanine 2 is modified to N-acetylalanine. Residues 2–13 (AALGEPVRLERD) carry the Kinase interacting site motif. The L27 domain maps to 10 to 65 (LERDICRAIELLEKLQRSGEVPPQKLQALQRVLQSEFCNAVREVYEHVYETVDISS). The PDZ domain occupies 93–175 (VVELPKTEEG…KVKLVVRYTP (83 aa)).

It belongs to the lin-7 family. In terms of assembly, forms a complex with CASK and APBA1 or CASKIN1. Component of the brain-specific heterotrimeric complex (LIN-10-LIN-2-LIN-7 complex) composed of at least APBA1, CASK, and LIN7, which associates with the motor protein KIF17 to transport vesicles along microtubules. Can also interact with other modular proteins containing protein-protein interaction domains like PALS1, PALS2, MPP7, DLG1, DLG2 and DLG3 through its L27 domain. Interacts with DLG4 and GRIN2B as well as CDH1 and CTNNB1, the channels KCNJ12/Kir2.2, KCNJ4/Kir2.3 and probably KCNJ2/Kir2.1 and SLC6A12/BGT-1 via its PDZ domain. The association of LIN7A with cadherin and beta-catenin is calcium-dependent, occurs at synaptic junctions and requires the actin cytoskeleton. Interacts with EGFR, ERBB2, ERBB3 and ERBB4 with both PDZ and KID domains. Associates with KIF17 via APBA1. Interacts with HTR4. Forms a tripartite complex composed of DLG1, MPP7 and LIN7 (LIN7A or LIN7C). Interacts with MAPK12.

It localises to the cell membrane. The protein localises to the basolateral cell membrane. It is found in the cell junction. The protein resides in the postsynaptic density membrane. Its subcellular location is the tight junction. It localises to the synapse. The protein localises to the synaptosome. Plays a role in establishing and maintaining the asymmetric distribution of channels and receptors at the plasma membrane of polarized cells. Forms membrane-associated multiprotein complexes that may regulate delivery and recycling of proteins to the correct membrane domains. The tripartite complex composed of LIN7 (LIN7A, LIN7B or LIN7C), CASK and APBA1 associates with the motor protein KIF17 to transport vesicles containing N-methyl-D-aspartate (NMDA) receptor subunit NR2B along microtubules. This complex may have the potential to couple synaptic vesicle exocytosis to cell adhesion in brain. Ensures the proper localization of GRIN2B (subunit 2B of the NMDA receptor) to neuronal postsynaptic density and may function in localizing synaptic vesicles at synapses where it is recruited by beta-catenin and cadherin. Required to localize Kir2 channels, GABA transporter (SLC6A12) and EGFR/ERBB1, ERBB2, ERBB3 and ERBB4 to the basolateral membrane of epithelial cells. The chain is Protein lin-7 homolog C (LIN7C) from Bos taurus (Bovine).